The following is a 416-amino-acid chain: Serine hydroxymethyltransferase (416 aa).

Residues L121 and 125 to 127 (GHL) each bind (6S)-5,6,7,8-tetrahydrofolate. K230 is modified (N6-(pyridoxal phosphate)lysine).

This sequence belongs to the SHMT family. Homodimer. Pyridoxal 5'-phosphate is required as a cofactor.

It is found in the cytoplasm. The catalysed reaction is (6R)-5,10-methylene-5,6,7,8-tetrahydrofolate + glycine + H2O = (6S)-5,6,7,8-tetrahydrofolate + L-serine. It functions in the pathway one-carbon metabolism; tetrahydrofolate interconversion. It participates in amino-acid biosynthesis; glycine biosynthesis; glycine from L-serine: step 1/1. Catalyzes the reversible interconversion of serine and glycine with tetrahydrofolate (THF) serving as the one-carbon carrier. This reaction serves as the major source of one-carbon groups required for the biosynthesis of purines, thymidylate, methionine, and other important biomolecules. Also exhibits THF-independent aldolase activity toward beta-hydroxyamino acids, producing glycine and aldehydes, via a retro-aldol mechanism. This Nitrosospira multiformis (strain ATCC 25196 / NCIMB 11849 / C 71) protein is Serine hydroxymethyltransferase.